A 482-amino-acid polypeptide reads, in one-letter code: tRNA sulfurtransferase (482 aa).

In terms of domain architecture, THUMP spans 61–165 (QQVLEILTTT…DDKLNQILAH (105 aa)). Residues 183–184 (LI), Lys265, Gly287, and Gln296 each bind ATP. Residues Cys344 and Cys456 are joined by a disulfide bond. The 79-residue stretch at 404 to 482 (IEEHAVVLDI…GFNNVKVYRP (79 aa)) folds into the Rhodanese domain. Cys456 functions as the Cysteine persulfide intermediate in the catalytic mechanism.

The protein belongs to the ThiI family.

The protein localises to the cytoplasm. It catalyses the reaction [ThiI sulfur-carrier protein]-S-sulfanyl-L-cysteine + a uridine in tRNA + 2 reduced [2Fe-2S]-[ferredoxin] + ATP + H(+) = [ThiI sulfur-carrier protein]-L-cysteine + a 4-thiouridine in tRNA + 2 oxidized [2Fe-2S]-[ferredoxin] + AMP + diphosphate. The catalysed reaction is [ThiS sulfur-carrier protein]-C-terminal Gly-Gly-AMP + S-sulfanyl-L-cysteinyl-[cysteine desulfurase] + AH2 = [ThiS sulfur-carrier protein]-C-terminal-Gly-aminoethanethioate + L-cysteinyl-[cysteine desulfurase] + A + AMP + 2 H(+). It functions in the pathway cofactor biosynthesis; thiamine diphosphate biosynthesis. Functionally, catalyzes the ATP-dependent transfer of a sulfur to tRNA to produce 4-thiouridine in position 8 of tRNAs, which functions as a near-UV photosensor. Also catalyzes the transfer of sulfur to the sulfur carrier protein ThiS, forming ThiS-thiocarboxylate. This is a step in the synthesis of thiazole, in the thiamine biosynthesis pathway. The sulfur is donated as persulfide by IscS. In Vibrio vulnificus (strain CMCP6), this protein is tRNA sulfurtransferase.